The following is a 226-amino-acid chain: ATP synthase F(0) complex subunit a (226 aa).

The next 6 membrane-spanning stretches (helical) occupy residues 6–26 (FASF…IVLF), 68–88 (WALM…LGLL), 97–117 (QLSM…ITGF), 138–158 (IPML…ALAV), 164–184 (ITAG…LMSI), and 189–209 (ALIT…VAMI).

This sequence belongs to the ATPase A chain family. Component of the ATP synthase complex composed at least of ATP5F1A/subunit alpha, ATP5F1B/subunit beta, ATP5MC1/subunit c (homooctomer), MT-ATP6/subunit a, MT-ATP8/subunit 8, ATP5ME/subunit e, ATP5MF/subunit f, ATP5MG/subunit g, ATP5MK/subunit k, ATP5MJ/subunit j, ATP5F1C/subunit gamma, ATP5F1D/subunit delta, ATP5F1E/subunit epsilon, ATP5PF/subunit F6, ATP5PB/subunit b, ATP5PD/subunit d, ATP5PO/subunit OSCP. ATP synthase complex consists of a soluble F(1) head domain (subunits alpha(3) and beta(3)) - the catalytic core - and a membrane F(0) domain - the membrane proton channel (subunits c, a, 8, e, f, g, k and j). These two domains are linked by a central stalk (subunits gamma, delta, and epsilon) rotating inside the F1 region and a stationary peripheral stalk (subunits F6, b, d, and OSCP). Interacts with DNAJC30; interaction is direct.

The protein localises to the mitochondrion inner membrane. The catalysed reaction is H(+)(in) = H(+)(out). Functionally, subunit a, of the mitochondrial membrane ATP synthase complex (F(1)F(0) ATP synthase or Complex V) that produces ATP from ADP in the presence of a proton gradient across the membrane which is generated by electron transport complexes of the respiratory chain. ATP synthase complex consist of a soluble F(1) head domain - the catalytic core - and a membrane F(1) domain - the membrane proton channel. These two domains are linked by a central stalk rotating inside the F(1) region and a stationary peripheral stalk. During catalysis, ATP synthesis in the catalytic domain of F(1) is coupled via a rotary mechanism of the central stalk subunits to proton translocation. With the subunit c (ATP5MC1), forms the proton-conducting channel in the F(0) domain, that contains two crucial half-channels (inlet and outlet) that facilitate proton movement from the mitochondrial intermembrane space (IMS) into the matrix. Protons are taken up via the inlet half-channel and released through the outlet half-channel, following a Grotthuss mechanism. The polypeptide is ATP synthase F(0) complex subunit a (Ovis aries (Sheep)).